Consider the following 101-residue polypeptide: Large ribosomal subunit protein uL23 (101 aa).

The protein belongs to the universal ribosomal protein uL23 family. In terms of assembly, part of the 50S ribosomal subunit. Contacts protein L29, and trigger factor when it is bound to the ribosome.

One of the early assembly proteins it binds 23S rRNA. One of the proteins that surrounds the polypeptide exit tunnel on the outside of the ribosome. Forms the main docking site for trigger factor binding to the ribosome. In Rhodococcus erythropolis (strain PR4 / NBRC 100887), this protein is Large ribosomal subunit protein uL23.